The chain runs to 367 residues: Cytochrome b (367 aa).

Transmembrane regions (helical) follow at residues 25–45 (FGSM…FLAI), 69–90 (WIMQ…YIHI), 105–125 (WLSG…GYVL), and 170–190 (FFAL…IHII). Heme b contacts are provided by His75 and His89. 2 residues coordinate heme b: His174 and His188. An a ubiquinone-binding site is contributed by His193. 4 helical membrane-spanning segments follow: residues 218 to 238 (YKDV…MSFT), 280 to 300 (LGGT…PFTH), 312 to 332 (LTQA…WTAT), and 339 to 358 (FIFI…IINP).

The protein belongs to the cytochrome b family. As to quaternary structure, the cytochrome bc1 complex contains 3 respiratory subunits (MT-CYB, CYC1 and UQCRFS1), 2 core proteins (UQCRC1 and UQCRC2) and probably 6 low-molecular weight proteins. Heme b is required as a cofactor.

The protein localises to the mitochondrion inner membrane. Its function is as follows. Component of the ubiquinol-cytochrome c reductase complex (complex III or cytochrome b-c1 complex) that is part of the mitochondrial respiratory chain. The b-c1 complex mediates electron transfer from ubiquinol to cytochrome c. Contributes to the generation of a proton gradient across the mitochondrial membrane that is then used for ATP synthesis. This Austrelaps superbus (Lowland copperhead snake) protein is Cytochrome b (MT-CYB).